A 171-amino-acid polypeptide reads, in one-letter code: Orotate phosphoribosyltransferase (171 aa).

5-phospho-alpha-D-ribose 1-diphosphate is bound by residues arginine 85, lysine 86, arginine 88, histidine 90, and 110-118; that span reads EDVVTTGNS. Threonine 114 and arginine 142 together coordinate orotate.

It belongs to the purine/pyrimidine phosphoribosyltransferase family. PyrE subfamily. As to quaternary structure, homodimer. Requires Mg(2+) as cofactor.

The catalysed reaction is orotidine 5'-phosphate + diphosphate = orotate + 5-phospho-alpha-D-ribose 1-diphosphate. It participates in pyrimidine metabolism; UMP biosynthesis via de novo pathway; UMP from orotate: step 1/2. Functionally, catalyzes the transfer of a ribosyl phosphate group from 5-phosphoribose 1-diphosphate to orotate, leading to the formation of orotidine monophosphate (OMP). The protein is Orotate phosphoribosyltransferase of Thermoplasma acidophilum (strain ATCC 25905 / DSM 1728 / JCM 9062 / NBRC 15155 / AMRC-C165).